We begin with the raw amino-acid sequence, 441 residues long: Alpha-methylserine aldolase (441 aa).

N6-(pyridoxal phosphate)lysine is present on Lys-256.

It belongs to the SHMT family. Alpha-methylserine aldolase subfamily. Homodimer. The cofactor is pyridoxal 5'-phosphate.

It carries out the reaction 2-methyl-L-serine = formaldehyde + L-alanine. Its function is as follows. Catalyzes the reversible interconversion of alpha-methyl-L-serine to L-alanine and formaldehyde. This chain is Alpha-methylserine aldolase, found in Variovorax paradoxus.